Here is a 950-residue protein sequence, read N- to C-terminus: Bifunctional glutamine synthetase adenylyltransferase/adenylyl-removing enzyme (950 aa).

Residues 1 to 440 (MLPLPSELQI…VFDHLIGDDA (440 aa)) form an adenylyl removase region. Residues 449–950 (HGLYKSLWQD…KWLVAAPSDV (502 aa)) form an adenylyl transferase region.

It belongs to the GlnE family. Mg(2+) is required as a cofactor.

It catalyses the reaction [glutamine synthetase]-O(4)-(5'-adenylyl)-L-tyrosine + phosphate = [glutamine synthetase]-L-tyrosine + ADP. The catalysed reaction is [glutamine synthetase]-L-tyrosine + ATP = [glutamine synthetase]-O(4)-(5'-adenylyl)-L-tyrosine + diphosphate. In terms of biological role, involved in the regulation of glutamine synthetase GlnA, a key enzyme in the process to assimilate ammonia. When cellular nitrogen levels are high, the C-terminal adenylyl transferase (AT) inactivates GlnA by covalent transfer of an adenylyl group from ATP to specific tyrosine residue of GlnA, thus reducing its activity. Conversely, when nitrogen levels are low, the N-terminal adenylyl removase (AR) activates GlnA by removing the adenylyl group by phosphorolysis, increasing its activity. The regulatory region of GlnE binds the signal transduction protein PII (GlnB) which indicates the nitrogen status of the cell. The chain is Bifunctional glutamine synthetase adenylyltransferase/adenylyl-removing enzyme from Yersinia enterocolitica serotype O:8 / biotype 1B (strain NCTC 13174 / 8081).